A 66-amino-acid chain; its full sequence is Large ribosomal subunit protein bL33c (66 aa).

It belongs to the bacterial ribosomal protein bL33 family.

The protein localises to the plastid. Its subcellular location is the chloroplast. The polypeptide is Large ribosomal subunit protein bL33c (Fagopyrum esculentum subsp. ancestrale (Wild buckwheat)).